We begin with the raw amino-acid sequence, 127 residues long: Fumarate reductase subunit C (127 aa).

3 helical membrane-spanning segments follow: residues 30-50, 58-78, and 107-127; these read ATVL…GSLV, GWLS…ALLG, and IIVL…LMVV.

It belongs to the FrdC family. As to quaternary structure, part of an enzyme complex containing four subunits: a flavoprotein (FrdA), an iron-sulfur protein (FrdB), and two hydrophobic anchor proteins (FrdC and FrdD).

It is found in the cell inner membrane. Functionally, anchors the catalytic components of the fumarate reductase complex to the cell membrane, binds quinones. This is Fumarate reductase subunit C from Vibrio atlanticus (strain LGP32) (Vibrio splendidus (strain Mel32)).